We begin with the raw amino-acid sequence, 160 residues long: MVAQIRIGQGMDVHAFEEGKFVTLAGVQIPHTHGLKAHSDGDVVLHALCDALLGALALGDIGQHFPDTDPEFKGADSRVLLKHVYQLILDRGYHLNNADITVACERPKLAKYNLEMRQSIADVLNVDLNQISIKATTTEKLGFTGRQEGILATATVLISH.

A divalent metal cation-binding residues include Asp-12 and His-14. 4-CDP-2-C-methyl-D-erythritol 2-phosphate-binding positions include 12–14 (DVH) and 38–39 (HS). His-46 contributes to the a divalent metal cation binding site. Residues 60 to 62 (DIG), 65 to 69 (FPDTD), 136 to 139 (TTTE), Phe-143, and Arg-146 contribute to the 4-CDP-2-C-methyl-D-erythritol 2-phosphate site.

The protein belongs to the IspF family. In terms of assembly, homotrimer. The cofactor is a divalent metal cation.

The catalysed reaction is 4-CDP-2-C-methyl-D-erythritol 2-phosphate = 2-C-methyl-D-erythritol 2,4-cyclic diphosphate + CMP. The protein operates within isoprenoid biosynthesis; isopentenyl diphosphate biosynthesis via DXP pathway; isopentenyl diphosphate from 1-deoxy-D-xylulose 5-phosphate: step 4/6. Functionally, involved in the biosynthesis of isopentenyl diphosphate (IPP) and dimethylallyl diphosphate (DMAPP), two major building blocks of isoprenoid compounds. Catalyzes the conversion of 4-diphosphocytidyl-2-C-methyl-D-erythritol 2-phosphate (CDP-ME2P) to 2-C-methyl-D-erythritol 2,4-cyclodiphosphate (ME-CPP) with a corresponding release of cytidine 5-monophosphate (CMP). The polypeptide is 2-C-methyl-D-erythritol 2,4-cyclodiphosphate synthase (Acinetobacter baumannii (strain SDF)).